The following is a 430-amino-acid chain: Glutamate-1-semialdehyde 2,1-aminomutase (430 aa).

Lysine 265 carries the post-translational modification N6-(pyridoxal phosphate)lysine.

This sequence belongs to the class-III pyridoxal-phosphate-dependent aminotransferase family. HemL subfamily. In terms of assembly, homodimer. Requires pyridoxal 5'-phosphate as cofactor.

The protein localises to the cytoplasm. The catalysed reaction is (S)-4-amino-5-oxopentanoate = 5-aminolevulinate. It participates in porphyrin-containing compound metabolism; protoporphyrin-IX biosynthesis; 5-aminolevulinate from L-glutamyl-tRNA(Glu): step 2/2. In Shewanella sp. (strain ANA-3), this protein is Glutamate-1-semialdehyde 2,1-aminomutase.